A 133-amino-acid chain; its full sequence is Large ribosomal subunit protein uL15 (133 aa).

The disordered stretch occupies residues 1 to 64 (MGLENLKPAK…QPLQRRLPKI (64 aa)).

The protein belongs to the universal ribosomal protein uL15 family. As to quaternary structure, part of the 50S ribosomal subunit.

Functionally, binds to the 23S rRNA. This chain is Large ribosomal subunit protein uL15, found in Helicobacter pylori (strain G27).